The primary structure comprises 349 residues: MAANGLMAASSVFLHRPVHPHFSFSSRTNQMVPLGFKGRVSFIGNVKRCFPVVLSMGKSETFEEAGNSVAPGNGISIMVNGCSGKMGKAVIKAADSAGVNIVPTSFGSVEEAGQTVEVCGKEILVHGPTEREKVLSSVFEKYPELIVVDYTIPSAVNDNAELYGKVGVPFVMGTTGGDRTRLYKTVEESKIYAVISPQMGKQVVAFLAAMEIMSEQFPGAFAGYSLEVMESHQASKLDASGTAKAVISCFQKLGVSYDMDQIQLIRDPKQQIEVVGVPEEHVSGHAFHLYHLTSPDKTVSFEFQHNVCGRSIYAEGTVDAVLFLAKKIRSKAEKRIYNMIDVLREGNMR.

The transit peptide at 1-53 (MAANGLMAASSVFLHRPVHPHFSFSSRTNQMVPLGFKGRVSFIGNVKRCFPVV) directs the protein to the chloroplast. NAD(+) is bound by residues 81 to 86 (GCSGKM), 173 to 175 (GTT), and 196 to 199 (SPQM). The active-site Proton donor/acceptor is the His232. Lys236 serves as the catalytic Proton donor. A (S)-2,3,4,5-tetrahydrodipicolinate-binding site is contributed by 241-242 (GT).

Belongs to the DapB family.

It localises to the plastid. The protein localises to the chloroplast. It catalyses the reaction (S)-2,3,4,5-tetrahydrodipicolinate + NAD(+) + H2O = (2S,4S)-4-hydroxy-2,3,4,5-tetrahydrodipicolinate + NADH + H(+). The enzyme catalyses (S)-2,3,4,5-tetrahydrodipicolinate + NADP(+) + H2O = (2S,4S)-4-hydroxy-2,3,4,5-tetrahydrodipicolinate + NADPH + H(+). The protein operates within amino-acid biosynthesis; L-lysine biosynthesis via DAP pathway; (S)-tetrahydrodipicolinate from L-aspartate: step 4/4. Functionally, catalyzes the conversion of 4-hydroxy-tetrahydrodipicolinate (HTPA) to tetrahydrodipicolinate. The chain is 4-hydroxy-tetrahydrodipicolinate reductase 2, chloroplastic (DAPB2) from Arabidopsis thaliana (Mouse-ear cress).